Consider the following 301-residue polypeptide: Probable alpha-L-glutamate ligase 2 (301 aa).

Residues 104-287 (MQLLSRKGIG…VASMIIEFIV (184 aa)) form the ATP-grasp domain. ATP contacts are provided by residues Lys-141, 178–179 (EY), Asp-187, and 211–213 (RSN). Asp-248, Glu-260, and Asn-262 together coordinate Mg(2+). The Mn(2+) site is built by Asp-248, Glu-260, and Asn-262.

Belongs to the RimK family. Requires Mg(2+) as cofactor. Mn(2+) serves as cofactor.

This Pseudoalteromonas atlantica (strain T6c / ATCC BAA-1087) protein is Probable alpha-L-glutamate ligase 2.